Reading from the N-terminus, the 423-residue chain is D-threonate kinase (423 aa).

Substrate-binding positions include Asp9, Arg51, and 81–84; that span reads KIDS. Residues Ser245, 355 to 358, and Gly401 contribute to the ATP site; that span reads GGDI.

This sequence belongs to the four-carbon acid sugar kinase family.

The enzyme catalyses D-threonate + ATP = 4-O-phospho-D-threonate + ADP + H(+). In terms of biological role, catalyzes the ATP-dependent phosphorylation of D-threonate to D-threonate 4-phosphate. Can also phosphorylate 4-hydroxy-L-threonine, with lower efficiency. This side reaction may serve to deal with the toxicity of 4-hydroxy-L-threonine by converting it into 4-hydroxy-L-threonine 4-phosphate, a useful product that can be used by PdxA2. This Salmonella typhimurium (strain LT2 / SGSC1412 / ATCC 700720) protein is D-threonate kinase.